Reading from the N-terminus, the 156-residue chain is Small ribosomal subunit protein uS7 (156 aa).

The protein belongs to the universal ribosomal protein uS7 family. In terms of assembly, part of the 30S ribosomal subunit. Contacts proteins S9 and S11.

In terms of biological role, one of the primary rRNA binding proteins, it binds directly to 16S rRNA where it nucleates assembly of the head domain of the 30S subunit. Is located at the subunit interface close to the decoding center, probably blocks exit of the E-site tRNA. The protein is Small ribosomal subunit protein uS7 of Idiomarina loihiensis (strain ATCC BAA-735 / DSM 15497 / L2-TR).